Consider the following 348-residue polypeptide: VIP36-like protein (348 aa).

Positions 1-38 (MAATLGPLGSWQQWRRCLLARDGSRMLLLLLLLGSGQG) are cleaved as a signal peptide. Residues 39-313 (PQQVGAGQTF…APLPPLSGLA (275 aa)) are Lumenal-facing. Residues 49 to 274 (EYLKREHSLS…DVISLKLFEL (226 aa)) enclose the L-type lectin-like domain. Residues Ser-93 and Asp-128 each contribute to the a carbohydrate site. Ca(2+) is bound by residues Asp-159, Tyr-161, and Asn-163. 161-163 (YPN) is a binding site for a carbohydrate. Asn-181 carries an N-linked (GlcNAc...) asparagine glycan. Residue His-188 coordinates a carbohydrate. Asp-191 serves as a coordination point for Ca(2+). A disulfide bridge links Cys-200 with Cys-237. 258 to 260 (GDL) is a binding site for a carbohydrate. A helical membrane pass occupies residues 314 to 334 (LFHIVFFSLVIFVFAIVIGII). The Cytoplasmic segment spans residues 335-348 (LYNKWQEQSRKRFY). The Endoplasmic reticulum retention signal motif lies at 344 to 346 (RKR).

It localises to the endoplasmic reticulum membrane. It is found in the golgi apparatus membrane. Functionally, may be involved in the regulation of export from the endoplasmic reticulum of a subset of glycoproteins. May function as a regulator of ERGIC-53. The chain is VIP36-like protein (LMAN2L) from Pongo abelii (Sumatran orangutan).